A 1242-amino-acid chain; its full sequence is von Willebrand factor A domain-containing protein 5B2 (1242 aa).

Positions 1-138 (MPGLYCPSSW…TMTVTLHSSR (138 aa)) constitute a VIT domain. The VWFA domain maps to 354-527 (ELLFLLDSSS…KALEPALSDI (174 aa)). 6 disordered regions span residues 569–650 (SRPP…SDTA), 670–726 (CSAS…CPLP), 751–794 (LAGR…GQGL), 957–976 (CSSE…SHLD), 987–1055 (KGLQ…GSDH), and 1118–1159 (QGDS…GLGG). Low complexity predominate over residues 588-604 (PSPEEAPSAASPGTEPT). A compositionally biased stretch (polar residues) spans 605–619 (GTSEPLGTGTVSAEL). Residues 681 to 700 (TGSSESPGSQGPGSPEGSAP) show a composition bias toward low complexity. A compositionally biased stretch (low complexity) spans 1125–1138 (SCSPSPSSGSEGPG).

This Homo sapiens (Human) protein is von Willebrand factor A domain-containing protein 5B2 (VWA5B2).